The chain runs to 230 residues: DNA repair protein RecO (230 aa).

It belongs to the RecO family.

Functionally, involved in DNA repair and RecF pathway recombination. This chain is DNA repair protein RecO, found in Pseudoalteromonas translucida (strain TAC 125).